We begin with the raw amino-acid sequence, 218 residues long: Zinc finger BED domain-containing protein 2 (218 aa).

Positions 1–11 (MMRREDEEEEG) are enriched in acidic residues. Residues 1–24 (MMRREDEEEEGTMMKAKGDLEMKE) are disordered. Residues 52-113 (TRFSEAWEYF…SMHREELEKS (62 aa)) form a BED-type zinc finger. Zn(2+)-binding residues include cysteine 78, cysteine 81, histidine 101, and histidine 106. The segment at 104–137 (SMHREELEKSGHGQAGQRQDPRPHGPQLPTGIEG) is disordered. Over residues 105–114 (MHREELEKSG) the composition is skewed to basic and acidic residues.

Expressed in keratinocytes.

Its subcellular location is the nucleus. Transcriptional regulator which has intrinsic repressor activity and which competes with the transcriptional activator IRF1 for binding to the 5'-[CA]GAA[AC]C[CT]-3' consensus sequence in gene promoters. May thereby play a role in keratinocyte differentiation. This Homo sapiens (Human) protein is Zinc finger BED domain-containing protein 2 (ZBED2).